We begin with the raw amino-acid sequence, 340 residues long: GTP 3',8-cyclase (340 aa).

Positions 20–246 (RFERQYVYLR…PKALSDGPAK (227 aa)) constitute a Radical SAM core domain. Arginine 29 is a GTP binding site. [4Fe-4S] cluster contacts are provided by cysteine 36 and cysteine 40. Tyrosine 42 contacts S-adenosyl-L-methionine. Cysteine 43 contacts [4Fe-4S] cluster. Arginine 79 contributes to the GTP binding site. Glycine 83 serves as a coordination point for S-adenosyl-L-methionine. Threonine 110 contributes to the GTP binding site. Position 134 (serine 134) interacts with S-adenosyl-L-methionine. GTP is bound at residue lysine 171. Position 205 (methionine 205) interacts with S-adenosyl-L-methionine. [4Fe-4S] cluster-binding residues include cysteine 268 and cysteine 271. 273 to 275 (RLR) is a binding site for GTP. Position 285 (cysteine 285) interacts with [4Fe-4S] cluster.

This sequence belongs to the radical SAM superfamily. MoaA family. As to quaternary structure, monomer and homodimer. It depends on [4Fe-4S] cluster as a cofactor.

It catalyses the reaction GTP + AH2 + S-adenosyl-L-methionine = (8S)-3',8-cyclo-7,8-dihydroguanosine 5'-triphosphate + 5'-deoxyadenosine + L-methionine + A + H(+). The protein operates within cofactor biosynthesis; molybdopterin biosynthesis. Functionally, catalyzes the cyclization of GTP to (8S)-3',8-cyclo-7,8-dihydroguanosine 5'-triphosphate. This is GTP 3',8-cyclase from Actinobacillus pleuropneumoniae serotype 7 (strain AP76).